The following is a 154-amino-acid chain: Protein ripply (154 aa).

The WRPW motif motif lies at 38–41 (WRPW). 2 disordered regions span residues 54–86 (IRERRSKPYARPSSTSNGSTRGPEPGPTSFQHP) and 121–154 (EDPAQSDDSDFESDYEDDSDTDYKPLKRNAPILN). Residues 85-119 (HPVKLHWSKPVYDYMYQYGKQLLDAFPVQATICIV) are ripply homology domain. Over residues 121-140 (EDPAQSDDSDFESDYEDDSD) the composition is skewed to acidic residues.

It belongs to the ripply family. As to expression, in the late gastrula stage, expression appears in the dorsal presomitic mesoderm and in the first three pairs of nascent somites. Expressed strongly in forming somites and then expression is rapidly down-regulated except in the first somite pair where expression is maintained for a longer period. Also expressed in the presumptive notochord and in the tail bud at the 48 hour larval stage. Expression disappears by the 72 hour stage.

It localises to the nucleus. May play a role in somitogenesis. The sequence is that of Protein ripply from Branchiostoma belcheri (Amphioxus).